The sequence spans 540 residues: Isocitrate lyase (540 aa).

A substrate-binding site is contributed by 103 to 105 (SGW). Asp187 is a Mg(2+) binding site. Residue Cys225 is the Proton acceptor of the active site. Substrate-binding positions include 226–227 (GH), 385–389 (NNSPS), and Thr458.

It belongs to the isocitrate lyase/PEP mutase superfamily. Isocitrate lyase family. As to quaternary structure, homotetramer. Requires Mg(2+) as cofactor.

The enzyme catalyses D-threo-isocitrate = glyoxylate + succinate. It functions in the pathway carbohydrate metabolism; glyoxylate cycle; (S)-malate from isocitrate: step 1/2. Its pathway is one-carbon metabolism; formaldehyde assimilation via serine pathway. Its activity is regulated as follows. In the presence of magnesium, inhibited by oxalate, potassium cyanide, manganese, silver, cadmium and to a lesser extent by succinate, glycolate, iodoacetamide, DL-penicillamine, aluminum, sodium, potassium, lithium and strontium. Functionally, involved in the metabolic adaptation in response to environmental changes. Catalyzes the reversible formation of succinate and glyoxylate from isocitrate, a key step of the glyoxylate cycle, which operates as an anaplerotic route for replenishing the tricarboxylic acid cycle during growth on fatty acid substrates. May be involved in the assimilation of one-carbon compounds via the isocitrate lyase-positive serine pathway. In Hyphomicrobium methylovorum, this protein is Isocitrate lyase.